A 588-amino-acid chain; its full sequence is MFS siderochrome iron transporter 1 (588 aa).

Transmembrane regions (helical) follow at residues 60–80 (QVWS…ITFV), 104–124 (LTAS…LPLA), 133–153 (PQGF…MAAC), 161–181 (AAQV…SIFI), 191–211 (ALMF…GGPL), 225–245 (YGAF…VFAW), 278–298 (IIGI…FSLY), 307–327 (SSLV…FALY), 348–368 (LGAC…DSYF), 385–405 (YIVN…GILV), 413–433 (WLAL…MITF), 440–460 (IGYI…CVIT), and 473–495 (YVAV…GQTV). Asparagine 519 carries N-linked (GlcNAc...) asparagine glycosylation. Residues 552 to 572 (KYMLIGGTAILAVGLGATMMW) traverse the membrane as a helical segment.

This sequence belongs to the major facilitator superfamily.

It is found in the membrane. Its function is as follows. Major facilitator transporter involved in siderophore transport. In Ajellomyces capsulatus (Darling's disease fungus), this protein is MFS siderochrome iron transporter 1.